The chain runs to 579 residues: MAELLPGYSPSFKKPSEILRLSRRRSRSEASKTGLSPFSPGDVIKRVPGLRPFSPGPNKGAGVKRRNPFASLENTVCSPVKRRAETVAEYGAASLEPRALSAVRPSCLGQDSPEPPQFNSVEDVIWGDPLAADADPLVKTESPEKPAPACEIPKGSVTFPADWSLKTRLLFTSSHSFSWADHLKAQEEAQGLVMQCRATAVNLPHSIQEPKLSTDLRCAFQQSLVHWIHPSLPWVQLFPRIGVDRKMAGKNTPWSQDESLQQVLMSEWALSFTSLYNLLKAKLCPYFYVCTYQFTVLFRAAGLAGSDVITAVMSPTTRGLREAMKNEGITFSQPLVEDDTGKKQKKPEAASQGDINPEKENGTAEADEASDESDEDESFSWLEEMGVEDKIKKPDSISIKLRKEKNEVKLDHKPESVVLVKGTNTFTLLNFLINCKSIVAAAGLQAGLPPTLLSPVAFRGATMHALKARSVNVKTRVNSGYKDQFSLEITGPIMPHSLHSLTMLLQSAQRGSFSAGLYTHEPTAVFNTPIHSQAVKEISADLQNCGLHPCTVEQLTQVNELGKLSLRHLEMTDYRYTWK.

Disordered regions lie at residues 1–68 (MAEL…RRNP) and 331–379 (FSQP…DESF). The segment covering 339-348 (DTGKKQKKPE) has biased composition (basic and acidic residues). A compositionally biased stretch (acidic residues) spans 365 to 378 (EADEASDESDEDES).

Belongs to the DONSON family. In terms of assembly, component of the replisome complex.

The protein resides in the nucleus. Replisome component that maintains genome stability by protecting stalled or damaged replication forks. After the induction of replication stress, required for the stabilization of stalled replication forks, the efficient activation of the intra-S-phase and G/2M cell-cycle checkpoints and the maintenance of genome stability. The sequence is that of Protein downstream neighbor of son homolog from Xenopus laevis (African clawed frog).